The sequence spans 103 residues: uncharacterized protein (103 aa).

This is an uncharacterized protein from Saccharomyces cerevisiae (strain ATCC 204508 / S288c) (Baker's yeast).